The following is a 466-amino-acid chain: Citrate synthase, mitochondrial (466 aa).

A mitochondrion-targeting transit peptide spans Met-1 to Ser-27. The SIFI-degron signature appears at Ala-2–Leu-21. Lys-57 carries the N6-succinyllysine modification. Position 76 is an N6-acetyllysine; alternate (Lys-76). Lys-76 is subject to N6-succinyllysine; alternate. An N6-succinyllysine mark is found at Lys-103 and Lys-193. His-301 is a catalytic residue. 2 positions are modified to N6-acetyllysine; alternate: Lys-321 and Lys-327. Lys-321 and Lys-327 each carry N6-succinyllysine; alternate. Residue His-347 is part of the active site. Oxaloacetate is bound at residue Arg-356. An N6-acetyllysine; alternate modification is found at Lys-375. At Lys-375 the chain carries N6-succinyllysine; alternate. Residue Lys-382 is modified to N6-acetyllysine. Lys-393 carries the post-translational modification N6-acetyllysine; alternate. Lys-393 bears the N6-succinyllysine; alternate mark. The residue at position 395 (Lys-395) is an N6,N6,N6-trimethyllysine. Asp-402 is a catalytic residue. Oxaloacetate-binding residues include Arg-428 and Arg-448. At Lys-450 the chain carries N6-succinyllysine. Lys-459 bears the N6-acetyllysine; alternate mark. At Lys-459 the chain carries N6-succinyllysine; alternate.

The protein belongs to the citrate synthase family. Homodimer. Post-translationally, methylated. Trimethylation at Lys-395 by CSKMT decreases citrate synthase activity. In response to mitochondrial stress, the precursor protein is ubiquitinated by the SIFI complex in the cytoplasm before mitochondrial import, leading to its degradation. Within the SIFI complex, UBR4 initiates ubiquitin chain that are further elongated or branched by KCMF1.

It is found in the mitochondrion matrix. It catalyses the reaction oxaloacetate + acetyl-CoA + H2O = citrate + CoA + H(+). It functions in the pathway carbohydrate metabolism; tricarboxylic acid cycle; isocitrate from oxaloacetate: step 1/2. In terms of biological role, key enzyme of the Krebs tricarboxylic acid cycle which catalyzes the synthesis of citrate from acetyl coenzyme A and oxaloacetate. This Homo sapiens (Human) protein is Citrate synthase, mitochondrial (CS).